The sequence spans 151 residues: Probable calcium-binding protein CML31 (151 aa).

EF-hand domains follow at residues A14–E42, V44–E79, R84–D119, and Q120–A151. D20, D22, D24, R26, E31, D57, D59, D61, and E68 together coordinate Ca(2+). Ca(2+)-binding residues include D133, N135, D137, and E144.

Potential calcium sensor. This chain is Probable calcium-binding protein CML31 (CML31), found in Oryza sativa subsp. japonica (Rice).